A 183-amino-acid chain; its full sequence is Small ribosomal subunit protein uS5 (183 aa).

The region spanning 11 to 71 is the S5 DRBM domain; that stretch reads FLERVVGINR…EEAKKSFFRV (61 aa).

This sequence belongs to the universal ribosomal protein uS5 family. Part of the 30S ribosomal subunit. Contacts proteins S4 and S8.

Functionally, with S4 and S12 plays an important role in translational accuracy. Located at the back of the 30S subunit body where it stabilizes the conformation of the head with respect to the body. In Micrococcus luteus (Micrococcus lysodeikticus), this protein is Small ribosomal subunit protein uS5.